We begin with the raw amino-acid sequence, 500 residues long: Probable serine carboxypeptidase CPVL (500 aa).

A signal peptide spans 1-23 (MKVSLSFLLTILIVIITIKVNLS). Residues Asn-110 and Asn-161 are each glycosylated (N-linked (GlcNAc...) asparagine). Ser-233 is a catalytic residue. Residues Asn-333 and Asn-360 are each glycosylated (N-linked (GlcNAc...) asparagine). Residues Asp-414 and His-474 contribute to the active site.

It belongs to the peptidase S10 family.

The protein localises to the secreted. Functionally, may be involved in the digestion of phagocytosed particles in the lysosome, participation in an inflammatory protease cascade, and trimming of peptides for antigen presentation. This is Probable serine carboxypeptidase CPVL (cpvl) from Dictyostelium discoideum (Social amoeba).